The sequence spans 338 residues: Nicotinate-nucleotide--dimethylbenzimidazole phosphoribosyltransferase (338 aa).

E306 serves as the catalytic Proton acceptor.

This sequence belongs to the CobT family.

The catalysed reaction is 5,6-dimethylbenzimidazole + nicotinate beta-D-ribonucleotide = alpha-ribazole 5'-phosphate + nicotinate + H(+). Its pathway is nucleoside biosynthesis; alpha-ribazole biosynthesis; alpha-ribazole from 5,6-dimethylbenzimidazole: step 1/2. Functionally, catalyzes the synthesis of alpha-ribazole-5'-phosphate from nicotinate mononucleotide (NAMN) and 5,6-dimethylbenzimidazole (DMB). This chain is Nicotinate-nucleotide--dimethylbenzimidazole phosphoribosyltransferase, found in Cereibacter sphaeroides (strain ATCC 17025 / ATH 2.4.3) (Rhodobacter sphaeroides).